The chain runs to 276 residues: Proteasome subunit beta type-8 (276 aa).

A propeptide spans 1–72 (removed in mature form); sequence MALLEVCGAP…KNIRKEMVHG (72 aa). Threonine 73 serves as the catalytic Nucleophile.

It belongs to the peptidase T1B family. The 26S proteasome consists of a 20S proteasome core and two 19S regulatory subunits. The 20S proteasome core is composed of 28 subunits that are arranged in four stacked rings, resulting in a barrel-shaped structure. The two end rings are each formed by seven alpha subunits, and the two central rings are each formed by seven beta subunits. The catalytic chamber with the active sites is on the inside of the barrel. Component of the immunoproteasome, where it displaces the equivalent housekeeping subunit PSMB5. Component of the spermatoproteasome, a form of the proteasome specifically found in testis. Directly interacts with POMP. Autocleaved. The resulting N-terminal Thr residue of the mature subunit is responsible for the nucleophile proteolytic activity.

The protein localises to the cytoplasm. It localises to the nucleus. It carries out the reaction Cleavage of peptide bonds with very broad specificity.. Its function is as follows. The proteasome is a multicatalytic proteinase complex which is characterized by its ability to cleave peptides with Arg, Phe, Tyr, Leu, and Glu adjacent to the leaving group at neutral or slightly basic pH. The proteasome has an ATP-dependent proteolytic activity. This subunit is involved in antigen processing to generate class I binding peptides. May participate in the generation of spliced peptides resulting from the ligation of two separate proteasomal cleavage products that are not contiguous in the parental protein. Required for adipocyte differentiation. This Canis lupus familiaris (Dog) protein is Proteasome subunit beta type-8 (PSMB8).